The chain runs to 374 residues: Isocitrate dehydrogenase [NAD] catalytic subunit 6, mitochondrial (374 aa).

A mitochondrion-targeting transit peptide spans 1-44 (MTMTAFLARRLIGNGSSQILGTSSSSSGPFISVSRAFFSSSTPI). 4 residues coordinate substrate: Arg-127, Arg-137, Arg-158, and Asp-245. Mg(2+) is bound by residues Asp-245, Asp-269, and Asp-273.

Belongs to the isocitrate and isopropylmalate dehydrogenases family. In terms of assembly, heterooligomer of catalytic and regulatory subunits. Mg(2+) is required as a cofactor. The cofactor is Mn(2+). Ubiquitous. Predominantly expressed in leaves.

It is found in the mitochondrion. The enzyme catalyses D-threo-isocitrate + NAD(+) = 2-oxoglutarate + CO2 + NADH. Its function is as follows. Catalytic subunit of the NAD(+)-dependent isocitrate dehydrogenase involved in the oxidative decarboxylation of isocitrate to 2-oxoglutarate. Performs an essential role in the oxidative function of the citric acid cycle. The protein is Isocitrate dehydrogenase [NAD] catalytic subunit 6, mitochondrial (IDH6) of Arabidopsis thaliana (Mouse-ear cress).